A 103-amino-acid chain; its full sequence is Isocitrate dehydrogenase [NAD] subunit beta, mitochondrial (103 aa).

The protein belongs to the isocitrate and isopropylmalate dehydrogenases family. In terms of assembly, heterooligomer of subunits alpha (IDH3A), beta (IDH3B), and gamma (IDH3G) in the apparent ratio of 2:1:1. The heterodimer containing one IDH3A and one IDH3B subunit and the heterodimer containing one IDH3A and one IDH3G subunit assemble into a heterotetramer (which contains two subunits of IDH3A, one of IDH3B and one of IDH3G) and further into the heterooctamer.

It localises to the mitochondrion. With respect to regulation, the heterotetramer and the heterodimer composed of IDH3A and IDH3G subunits can be allosterically activated by citrate (CIT) or/and ADP, and the two activators can act independently or synergistically. The heterodimer composed of IDH3A and IDH3B subunits cannot be allosterically regulated and the allosteric regulation of the heterotetramer is through the IDH3G subunit and not the IDH3B subunit. The IDH3G subunit contains the allosteric site which consists of a CIT-binding site and an ADP-binding site, and the binding of CIT and ADP causes conformational changes at the allosteric site which are transmitted to the active site in the catalytic subunit (IDH3A) through a cascade of conformational changes at the heterodimer interface, leading to stabilization of the isocitrate-binding at the active site and thus activation of the enzyme. ATP can activate the heterotetramer and the heterodimer composed of IDH3A and IDH3G subunits at low concentrations but inhibits their activities at high concentrations, whereas ATP exhibits only inhibitory effect on the heterodimer composed of IDH3A and IDH3B subunits. Its function is as follows. Plays a structural role to facilitate the assembly and ensure the full activity of the enzyme catalyzing the decarboxylation of isocitrate (ICT) into alpha-ketoglutarate. The heterodimer composed of the alpha (IDH3A) and beta (IDH3B) subunits and the heterodimer composed of the alpha (IDH3A) and gamma (IDH3G) subunits, have considerable basal activity but the full activity of the heterotetramer (containing two subunits of IDH3A, one of IDH3B and one of IDH3G) requires the assembly and cooperative function of both heterodimers. The chain is Isocitrate dehydrogenase [NAD] subunit beta, mitochondrial (IDH3B) from Sus scrofa (Pig).